Here is a 485-residue protein sequence, read N- to C-terminus: Glutamyl-tRNA(Gln) amidotransferase subunit A (485 aa).

Catalysis depends on charge relay system residues K76 and S151. S175 (acyl-ester intermediate) is an active-site residue.

This sequence belongs to the amidase family. GatA subfamily. As to quaternary structure, heterotrimer of A, B and C subunits.

The enzyme catalyses L-glutamyl-tRNA(Gln) + L-glutamine + ATP + H2O = L-glutaminyl-tRNA(Gln) + L-glutamate + ADP + phosphate + H(+). Functionally, allows the formation of correctly charged Gln-tRNA(Gln) through the transamidation of misacylated Glu-tRNA(Gln) in organisms which lack glutaminyl-tRNA synthetase. The reaction takes place in the presence of glutamine and ATP through an activated gamma-phospho-Glu-tRNA(Gln). The polypeptide is Glutamyl-tRNA(Gln) amidotransferase subunit A (Pelagibacter ubique (strain HTCC1062)).